The following is a 213-amino-acid chain: Glycerol-3-phosphate acyltransferase (213 aa).

5 helical membrane passes run 3–23 (LLLF…LWIG), 68–88 (ILLP…GFFA), 112–132 (VLLG…VLVL), 134–154 (LFSM…LSVL), and 163–183 (LPNY…IIII).

It belongs to the PlsY family. Probably interacts with PlsX.

The protein localises to the cell membrane. It carries out the reaction an acyl phosphate + sn-glycerol 3-phosphate = a 1-acyl-sn-glycero-3-phosphate + phosphate. The protein operates within lipid metabolism; phospholipid metabolism. Functionally, catalyzes the transfer of an acyl group from acyl-phosphate (acyl-PO(4)) to glycerol-3-phosphate (G3P) to form lysophosphatidic acid (LPA). This enzyme utilizes acyl-phosphate as fatty acyl donor, but not acyl-CoA or acyl-ACP. In Streptococcus pyogenes serotype M28 (strain MGAS6180), this protein is Glycerol-3-phosphate acyltransferase.